Here is a 627-residue protein sequence, read N- to C-terminus: Coiled-coil domain-containing protein 22 (627 aa).

The tract at residues 1-321 (MEEADRILIH…VADVPATSQR (321 aa)) is sufficient for interaction with COMMD1. Residues 1-447 (MEEADRILIH…LQDCRELESS (447 aa)) form a sufficicient and required for interaction with CCDC93 region. Ser410 carries the post-translational modification Phosphoserine. Residues 448–535 (RRLAEIQELH…NSLSGKLDRT (88 aa)) adopt a coiled-coil conformation.

It belongs to the CCDC22 family. As to quaternary structure, component of the commander complex consisting of the CCC subcomplex and the retriever subcomplex. Component of the CCC (COMMD/CCDC22/CCDC93) subcomplex consisting of COMMD1, COMMD2, COMMD3, COMMD4, COMMD5, COMMD6, COMMD7, COMMD8, COMMD9, COMMD10, CCDC22 and CCDC93. Forms a coiled-coil heterodimer with CCDC22; this heterodimer interacts with the guanine nucleotide exchange factor DENND10; the interaction is direct. Interacts with CUL1, CUL2, CUL3, SKP1, BTRC. Interacts with SNX17 and SNX31. Interacts with CPNE1 and CPNE4.

Its subcellular location is the endosome. The protein localises to the cytoplasm. It is found in the cytoskeleton. The protein resides in the microtubule organizing center. It localises to the centrosome. Its function is as follows. Component of the commander complex that is essential for endosomal recycling of transmembrane cargos; the Commander complex is composed of composed of the CCC subcomplex and the retriever subcomplex. Component of the CCC complex, which is involved in the regulation of endosomal recycling of surface proteins, including integrins, signaling receptor and channels. Involved in regulation of NF-kappa-B signaling. Promotes ubiquitination of I-kappa-B-kinase subunit IKBKB and its subsequent proteasomal degradation leading to NF-kappa-B activation; the function may involve association with COMMD8 and a CUL1-dependent E3 ubiquitin ligase complex. May down-regulate NF-kappa-B activity via association with COMMD1 and involving a CUL2-dependent E3 ubiquitin ligase complex. Regulates the cellular localization of COMM domain-containing proteins, such as COMMD1 and COMMD10. Component of the CCC complex, which is involved in the regulation of endosomal recycling of surface proteins, including integrins, signaling receptor and channels. The CCC complex associates with SNX17, retriever and WASH complexes to prevent lysosomal degradation and promote cell surface recycling of numerous cargos such as integrins ITGA5:ITGB1. Plays a role in copper ion homeostasis. Involved in copper-dependent ATP7A trafficking between the trans-Golgi network and vesicles in the cell periphery; the function is proposed to depend on its association within the CCC complex and cooperation with the WASH complex on early endosomes. The polypeptide is Coiled-coil domain-containing protein 22 (Ccdc22) (Mus musculus (Mouse)).